The chain runs to 511 residues: LEM domain-containing protein 2 (511 aa).

Ala2 bears the N-acetylalanine mark. Residues 2–42 (AGLSDLELRRELQALGFQPGPITDTTRNVYRNKLRRLRGEA) form the LEM domain. 2 disordered regions span residues 18–110 (FQPG…SDAS) and 128–206 (GLSY…AGRT). Residues 38-80 (LRGEARLRDDERLREDAGPREDAGPRGPERQREEARLREEAPL) are compositionally biased toward basic and acidic residues. Residues 80–112 (LRARPAASVLRSEPWPLSPSPPAPSAASDASGP) are interaction with lamin A/C complexes. Residues 80–141 (LRARPAASVL…PPHAGPGPLR (62 aa)) form a required for nuclear retention and interaction with LMNA isoform C region. Composition is skewed to low complexity over residues 81-94 (RARPAASVLRSEPW) and 172-183 (APPSASARPHSA). 2 helical membrane passes run 221 to 241 (LLLWASLGLLLGFLAILWVKM) and 385 to 405 (VTHVLIFFWCLAFLWGLLILL). The winged-Helix (WH) stretch occupies residues 403–511 (ILLKYRWRKL…KPSSFSDSER (109 aa)). Ser505, Ser507, and Ser509 each carry phosphoserine.

As to quaternary structure, interacts (via N-terminus) with LMNA isoform C (via C-terminus) (in vitro). Interacts (via LEM domain) with BANF1. Interacts (via C-terminus) with CHMP7. Interacts (via N-terminus) with tubulin; the interaction causes microtubule bundling and stabilization (in vitro). Post-translationally, phosphorylated; strongly phosphorylated in mitosis compared to G1/S. Ubiquitously expressed, including liver, brain, heart, skeletal muscle, lung, testis, spleen, kidney and white adipose tissue.

It localises to the nucleus inner membrane. The protein resides in the nucleus envelope. It is found in the cytoplasm. The protein localises to the cytoskeleton. Its subcellular location is the spindle. Functionally, nuclear lamina-associated inner nuclear membrane protein that is involved in nuclear structure organization and maintenance of nuclear envelope (NE) integrity and NE reformation after mitosis. Plays a role as transmembrane adapter for the endosomal sorting complexes required for transport (ESCRT), and is thereby involved in ESCRT-mediated NE reformation. Promotes ESCRT-mediated NE closure by recruiting CHMP7 and downstream ESCRT-III proteins IST1/CHMP8 and CHMP2A to the reforming NE during anaphase. During nuclear reassembly, condenses into a liquid-like coating around microtubule spindles and coassembles with CHMP7 to form a macromolecular O-ring seal at the confluence between membranes, chromatin, and the spindle to facilitate early nuclear sealing. Plays a role in the organization of heterochromatin associated with the NE and in the maintenance of NE organization under mechanical stress. Required for embryonic development and is involved in regulation of several signaling pathways such as MAPK and AKT. Required for myoblast differentiation involving regulation of ERK signaling. Essential for cardiac homeostasis and proper heart function. This is LEM domain-containing protein 2 (Lemd2) from Mus musculus (Mouse).